An 839-amino-acid polypeptide reads, in one-letter code: MLGLVKKIFGDSNEREVKKMFKRVESINALEPTIKALSDDQLREKTAEFKARLANGEELDKILNEAFAVVREASIRVLGMRHFDVQMIGGMVLQEGRISEMKTGEGKTLVATLATYLNALMGKGVHVVTVNEYLAERDSSIMGKLYNFLGLTVGLNKNGLNPEEKREAYACDITYGTNNEFGFDYLRDNMVLYKEQMVQRPLFFAIIDEVDSILIDEARTPLIISGSANKSTELYYICSHFVKRLEEEKDFTIDEKLKIVNLTDDGVSKVEQAFNIDNLYDTAHITLNHHITAALKAQVLFKRDVDYVVQEGEVVIVDEFTGRLMVGRRYSDGLHQAIEAKEGLRVQSESMTLATITLQNYFRMYEKLAGMTGTAKTEEEEFKKIYGLDVVVIPTNKPVQRVDSPDLVFKTEAAKYRAVVNDIVERHKKGQPILVGTISIENSERLSQMLKQKGVPHNVLNAKQHEREAEIVARAGVYGAVTIATNMAGRGTDIQLGEGVAELGGLHIIGTERHESRRIDNQLRGRAGRQGDPGSSQFFLSMQDELMRRFGADNIMNMMDRLGMEEDMPIESRLVTRAVESAQKRVEGSNFDARKGVLQYDDVMNQQRLVVYKQRKDILEHENLSDVALNMIYAVMERAVSLHCPKEEVPEDWDLQALADAANNGFLYEETITAKMLKGMEAEEILELLKAEVDKQYKQREEEIGESIREFEKVVILRAVDSKWMDHIDAMDQLRQGIHLRAYAQNDPLREYQFEGYEMYQGMLAAVQEEVAMYIMKAEVSQNLERQDVIRGQGIDMDNLQTSGPSDRPDPETSGDADPKNRAQRRAQEQERKRQNKKQ.

ATP is bound by residues Gln86, 104-108 (GEGKT), and Asp493. The interval 794–839 (GIDMDNLQTSGPSDRPDPETSGDADPKNRAQRRAQEQERKRQNKKQ) is disordered. The segment covering 807–833 (DRPDPETSGDADPKNRAQRRAQEQERK) has biased composition (basic and acidic residues).

The protein belongs to the SecA family. As to quaternary structure, monomer and homodimer. Part of the essential Sec protein translocation apparatus which comprises SecA, SecYEG and auxiliary proteins SecDF. Other proteins may also be involved.

It localises to the cell membrane. The protein resides in the cytoplasm. The catalysed reaction is ATP + H2O + cellular proteinSide 1 = ADP + phosphate + cellular proteinSide 2.. Its function is as follows. Part of the Sec protein translocase complex. Interacts with the SecYEG preprotein conducting channel. Has a central role in coupling the hydrolysis of ATP to the transfer of proteins into and across the cell membrane, serving as an ATP-driven molecular motor driving the stepwise translocation of polypeptide chains across the membrane. The chain is Protein translocase subunit SecA from Brevibacillus brevis (strain 47 / JCM 6285 / NBRC 100599).